A 360-amino-acid polypeptide reads, in one-letter code: Peptide chain release factor 1 (360 aa).

An N5-methylglutamine modification is found at Gln235.

This sequence belongs to the prokaryotic/mitochondrial release factor family. In terms of processing, methylated by PrmC. Methylation increases the termination efficiency of RF1.

The protein localises to the cytoplasm. Its function is as follows. Peptide chain release factor 1 directs the termination of translation in response to the peptide chain termination codons UAG and UAA. This is Peptide chain release factor 1 from Delftia acidovorans (strain DSM 14801 / SPH-1).